A 338-amino-acid polypeptide reads, in one-letter code: Sulfotransferase 2B1 (338 aa).

A 3'-phosphoadenylyl sulfate-binding site is contributed by 67-72 (KSGTNW). Positions 95 and 100 each coordinate substrate. Catalysis depends on His-122, which acts as the Proton acceptor. 3'-phosphoadenylyl sulfate is bound by residues Arg-144, Ser-152, Tyr-207, 241–246 (SAFAAM), and 271–273 (RKG). The disordered stretch occupies residues 301-338 (VQRFPWDTSEEDSSPDGQPDPEPSPSPASDDPNPGSSQ). A compositionally biased stretch (low complexity) spans 327-338 (PASDDPNPGSSQ).

Belongs to the sulfotransferase 1 family. Expressed at high levels in epididymis, intestine and uterus, and low levels in brain and hypothalamus. Isoform 2 is most prominent in the brain and spinal cord, with modest expression in the lung, skin and spleen. Isoform 1 is most prominently expressed in skin and small intestine, with modest expression in muscle and prostate.

It is found in the cytoplasm. The protein localises to the cytosol. The protein resides in the microsome. Its subcellular location is the nucleus. The catalysed reaction is an alcohol + 3'-phosphoadenylyl sulfate = an alkyl sulfate + adenosine 3',5'-bisphosphate + H(+). It carries out the reaction pregnenolone + 3'-phosphoadenylyl sulfate = pregnenolone sulfate + adenosine 3',5'-bisphosphate + H(+). The enzyme catalyses 3beta-hydroxyandrost-5-en-17-one + 3'-phosphoadenylyl sulfate = dehydroepiandrosterone 3-sulfate + adenosine 3',5'-bisphosphate + H(+). It catalyses the reaction cholesterol + 3'-phosphoadenylyl sulfate = cholesterol sulfate + adenosine 3',5'-bisphosphate + H(+). Its function is as follows. Sulfotransferase that utilizes 3'-phospho-5'-adenylyl sulfate (PAPS) as sulfonate donor to catalyze the sulfate conjugation. Preferentially sulfonates cholesterol. Catalyzes sulfation of the 3beta-hydroxyl groups of steroids, such as, pregnenolone and dehydroepiandrosterone (DHEA). Cholesterol sulfation is approximately 10-fold higher than for pregnenolone and 20-fold higher than for DHEA. Plays a role in epidermal cholesterol metabolism and in the regulation of epidermal proliferation and differentiation. Functionally, strongly sulfonates pregnenolone, however is capable to sulfonate cholesterol with a high degree of efficiency. DHEA is a relatively poor substrate. This chain is Sulfotransferase 2B1 (Sult2b1), found in Mus musculus (Mouse).